The sequence spans 236 residues: Alpha-S2-casein (236 aa).

An N-terminal signal peptide occupies residues 1–15 (MKFFIFTCLLAVALA). 11 positions are modified to phosphoserine: Ser23, Ser24, Ser25, Ser28, Ser47, Ser80, Ser81, Ser82, Ser85, Ser157, and Ser169. The tract at residues 72-93 (PTEVYSSSSSSEESAKFPTERE) is disordered. Over residues 84 to 93 (ESAKFPTERE) the composition is skewed to basic and acidic residues.

Belongs to the alpha-casein family. In terms of processing, there are at least three different forms found in milk, with varying degrees of phosphorylation. These include form 10-P which is phosphorylated at ten sites that have not been determined, form 11-P which is phosphorylated at eleven sites and form 12-P which is phosphorylated at twelve sites. In terms of tissue distribution, mammary gland specific. Secreted in milk.

The protein localises to the secreted. Important role in the capacity of milk to transport calcium phosphate. This Equus asinus (Donkey) protein is Alpha-S2-casein.